Reading from the N-terminus, the 647-residue chain is LIM domain kinase 1 (647 aa).

2 consecutive LIM zinc-binding domains span residues 25-75 (CASC…CKKD) and 84-137 (CHGC…CGHC). A PDZ domain is found at 165-258 (LVSIPASSHG…LLQLTLEHDP (94 aa)). A Phosphoserine modification is found at Ser210. At Thr229 the chain carries Phosphothreonine. The segment at 260 to 319 (DTLGHGLGPETSPLSSPAYTPSGEAGSSARQKPVLRSCSIDRSPGAGSLGSPASQRKDLG) is disordered. Phosphoserine occurs at positions 298, 302, 307, and 310. Residues 302 to 313 (SPGAGSLGSPAS) are compositionally biased toward low complexity. Ser323 carries the phosphoserine; by MAPKAPK2 modification. Ser337 bears the Phosphoserine mark. A Protein kinase domain is found at 339–604 (LIHGEVLGKG…PSFVKLEHWL (266 aa)). ATP is bound by residues 345-353 (LGKGCFGQA) and Lys368. The active site involves Asp460. Thr508 carries the phosphothreonine; by ROCK1 and PAK1 modification.

This sequence belongs to the protein kinase superfamily. TKL Ser/Thr protein kinase family. In terms of assembly, interacts (via LIM domain) with the cytoplasmic domain of NRG1. Interacts with NISCH. Interacts with RLIM and RNF6. Self-associates to form homodimers. Interacts with HSP90AA1; this interaction promotes LIMK1 dimerization and subsequent transphosphorylation. Interacts with CDKN1C. Interacts with SSH1. Interacts with ROCK1. Interacts (via LIM zinc-binding domains) with FAM89B/LRAP25 (via LRR repeat). Forms a tripartite complex with CDC42BPA, CDC42BPB and FAM89B/LRAP25. Autophosphorylated. Phosphorylated on Thr-508 by ROCK1 and PAK1, resulting in activation. Phosphorylated by PAK4 which increases the ability of LIMK1 to phosphorylate cofilin. Phosphorylated at Ser-323 by MAPKAPK2 during activation of VEGFA-induced signaling, which results in activation of LIMK1 and promotion of actin reorganization, cell migration, and tubule formation of endothelial cells. Dephosphorylated and inactivated by SSH1. Phosphorylated by CDC42BP. Post-translationally, ubiquitinated. 'Lys-48'-linked polyubiquitination by RNF6 leads to proteasomal degradation through the 26S proteasome, modulating LIMK1 levels in the growth cone and its effect on axonal outgrowth. Also polyubiquitinated by RLIM. As to expression, highest expression in both adult and fetal nervous system. Detected ubiquitously throughout the different regions of adult brain, with highest levels in the cerebral cortex. Expressed to a lesser extent in heart and skeletal muscle.

It is found in the cytoplasm. It localises to the nucleus. The protein localises to the cytoskeleton. Its subcellular location is the cell projection. The protein resides in the lamellipodium. The enzyme catalyses L-seryl-[protein] + ATP = O-phospho-L-seryl-[protein] + ADP + H(+). The catalysed reaction is L-threonyl-[protein] + ATP = O-phospho-L-threonyl-[protein] + ADP + H(+). Serine/threonine-protein kinase that plays an essential role in the regulation of actin filament dynamics. Acts downstream of several Rho family GTPase signal transduction pathways. Activated by upstream kinases including ROCK1, PAK1 and PAK4, which phosphorylate LIMK1 on a threonine residue located in its activation loop. LIMK1 subsequently phosphorylates and inactivates the actin binding/depolymerizing factors cofilin-1/CFL1, cofilin-2/CFL2 and destrin/DSTN, thereby preventing the cleavage of filamentous actin (F-actin), and stabilizing the actin cytoskeleton. In this way LIMK1 regulates several actin-dependent biological processes including cell motility, cell cycle progression, and differentiation. Phosphorylates TPPP on serine residues, thereby promoting microtubule disassembly. Stimulates axonal outgrowth and may be involved in brain development. Functionally, has a dominant negative effect on actin cytoskeletal changes. Required for atypical chemokine receptor ACKR2-induced phosphorylation of cofilin (CFL1). The chain is LIM domain kinase 1 (LIMK1) from Homo sapiens (Human).